The sequence spans 311 residues: tRNA dimethylallyltransferase (311 aa).

12 to 19 (GPTASGKT) contacts ATP. 14–19 (TASGKT) is a substrate binding site. Interaction with substrate tRNA stretches follow at residues 37–40 (DSAL), 161–165 (QRINR), and 241–246 (RCVGYR).

It belongs to the IPP transferase family. In terms of assembly, monomer. It depends on Mg(2+) as a cofactor.

It catalyses the reaction adenosine(37) in tRNA + dimethylallyl diphosphate = N(6)-dimethylallyladenosine(37) in tRNA + diphosphate. Catalyzes the transfer of a dimethylallyl group onto the adenine at position 37 in tRNAs that read codons beginning with uridine, leading to the formation of N6-(dimethylallyl)adenosine (i(6)A). The polypeptide is tRNA dimethylallyltransferase (Histophilus somni (strain 129Pt) (Haemophilus somnus)).